The chain runs to 861 residues: Ribosome biogenesis protein BOP1 homolog (861 aa).

Positions 1–237 (MVANKSKATK…GDTSDEEDIR (237 aa)) are disordered. The span at 29 to 45 (NGRSTKQPEADSDQSAS) shows a compositional bias: polar residues. 2 stretches are compositionally biased toward acidic residues: residues 62 to 77 (DDGDSSDSEGEGDASD) and 87 to 143 (SDSD…EDLA). 3 stretches are compositionally biased toward basic and acidic residues: residues 144–156 (EPEKPRAIKEGSK), 174–190 (ETKKLLEAAAKEDEKLA), and 212–223 (PERKTGRLKNSD). WD repeat units follow at residues 522 to 561 (GHTDMIRTISIEPKGEYLVTGSDDKTIKIWEVSTARCIKT), 563 to 603 (PTGD…CLLS), 692 to 730 (KSKGLIQCVLFHPVKPCLFVATQRHIRVYDLVKQELLKK), 733 to 772 (PSCKWISSMAIHPKGDNLLVATYEKKMMWFDLDLSTRPYQ), 776 to 815 (LHFSAIRNVAFHQRYPLFASASDDRSVIVSHGMVYNDLMQ), and 831 to 861 (VNDFGAFDVVFHPTQPWLFSSGADNTVRLYT).

This sequence belongs to the WD repeat BOP1/ERB1 family.

The protein localises to the nucleus. The protein resides in the nucleolus. Its subcellular location is the nucleoplasm. Required for maturation of ribosomal RNAs and formation of the large ribosomal subunit. This chain is Ribosome biogenesis protein BOP1 homolog, found in Culex quinquefasciatus (Southern house mosquito).